The following is a 141-amino-acid chain: Vesicle-associated membrane protein 4 (141 aa).

The tract at residues 1 to 51 is disordered; the sequence is MPPKFKRHLNDDDVTGSVKSERRNLLEDDSDEEEDFFLRGPSGPRFGPRND. The Cytoplasmic portion of the chain corresponds to 1-115; sequence MPPKFKRHLN…RRQMWWRGCK (115 aa). 2 positions are modified to phosphoserine: S17 and S30. Positions 52-112 constitute a v-SNARE coiled-coil homology domain; it reads KIKHVQNQVD…KQLRRQMWWR (61 aa). A helical; Anchor for type IV membrane protein transmembrane segment spans residues 116–136; it reads IKAIMALVAAILLLVIIILIV. Residues 137–141 are Vesicular-facing; sequence MKYRT.

This sequence belongs to the synaptobrevin family. Identified in a complex containing STX6, STX12, VAMP4 and VTI1A. Interacts with BAIAP3; this interaction is increased in the presence of calcium.

It is found in the golgi apparatus. The protein localises to the trans-Golgi network membrane. Its function is as follows. Involved in the pathway that functions to remove an inhibitor (probably synaptotagmin-4) of calcium-triggered exocytosis during the maturation of secretory granules. May be a marker for this sorting pathway that is critical for remodeling the secretory response of granule. The protein is Vesicle-associated membrane protein 4 (VAMP4) of Homo sapiens (Human).